The chain runs to 417 residues: Serine hydroxymethyltransferase (417 aa).

N6-acetyllysine is present on Lys-54. (6S)-5,6,7,8-tetrahydrofolate is bound by residues Leu-121 and 125–127 (GHL). The residue at position 229 (Lys-229) is an N6-(pyridoxal phosphate)lysine. N6-acetyllysine is present on residues Lys-250, Lys-285, and Lys-354. 355 to 357 (SPF) serves as a coordination point for (6S)-5,6,7,8-tetrahydrofolate. N6-acetyllysine is present on Lys-375.

Belongs to the SHMT family. As to quaternary structure, homodimer. Pyridoxal 5'-phosphate is required as a cofactor.

It is found in the cytoplasm. The enzyme catalyses (6R)-5,10-methylene-5,6,7,8-tetrahydrofolate + glycine + H2O = (6S)-5,6,7,8-tetrahydrofolate + L-serine. It functions in the pathway one-carbon metabolism; tetrahydrofolate interconversion. The protein operates within amino-acid biosynthesis; glycine biosynthesis; glycine from L-serine: step 1/1. Functionally, catalyzes the reversible interconversion of serine and glycine with tetrahydrofolate (THF) serving as the one-carbon carrier. This reaction serves as the major source of one-carbon groups required for the biosynthesis of purines, thymidylate, methionine, and other important biomolecules. Also exhibits THF-independent aldolase activity toward beta-hydroxyamino acids, producing glycine and aldehydes, via a retro-aldol mechanism. This Shigella dysenteriae serotype 1 (strain Sd197) protein is Serine hydroxymethyltransferase.